The chain runs to 228 residues: uncharacterized protein (228 aa).

One can recognise an ABC transporter domain in the interval 7 to 228 (VEVHHLKKSV…LVNGQLQEEA (222 aa)). ATP is bound at residue 43–50 (GESGSGKS).

It belongs to the ABC transporter superfamily.

This is an uncharacterized protein from Escherichia coli O157:H7.